The primary structure comprises 244 residues: Cell division protein ZapD (244 aa).

This sequence belongs to the ZapD family. Interacts with FtsZ.

Its subcellular location is the cytoplasm. Its function is as follows. Cell division factor that enhances FtsZ-ring assembly. Directly interacts with FtsZ and promotes bundling of FtsZ protofilaments, with a reduction in FtsZ GTPase activity. This is Cell division protein ZapD from Shewanella sp. (strain MR-4).